Here is a 128-residue protein sequence, read N- to C-terminus: Orchestin (128 aa).

Positions 1–20 (MNKVFIIGVCLFIVSQAVLA) are cleaved as a signal peptide. The tract at residues 23 to 95 (WDSDESSDER…DEDSDDSQES (73 aa)) is disordered. 2 stretches are compositionally biased toward basic and acidic residues: residues 30-49 (DERLSDRSDESREEPRKLVV) and 56-81 (EDSNESAEVRRRDDSRESEEEPRKLS). The span at 84–93 (TSDEDSDDSQ) shows a compositional bias: acidic residues.

Post-translationally, phosphorylated on Ser and Tyr residues. Calcium-binding activity is dependent on serine phosphorylation but not on tyrosine phosphorylation. Posterior caeca epithelium of the gut.

The protein localises to the secreted. Functionally, plays a role in cuticle calcification. May induce precipitation of the calcium stored in the posterior caeca as calcium carbonate. In Cryptorchestia cavimana (Amphipod), this protein is Orchestin.